Reading from the N-terminus, the 685-residue chain is UvrABC system protein C (685 aa).

The region spanning 15–93 is the GIY-YIG domain; it reads ALPGVYRYFD…IKTQNPRFNI (79 aa). In terms of domain architecture, UVR spans 214–249; the sequence is QELLQAMEARMMAYSGQLAFEQAAEVRNQMQALSRV. Residues 365–388 are compositionally biased toward low complexity; it reads AQGGDHAPAAQGGDPPPAASSGGH. Residues 365 to 391 form a disordered region; the sequence is AQGGDHAPAAQGGDPPPAASSGGHPLR.

Belongs to the UvrC family. Interacts with UvrB in an incision complex.

The protein resides in the cytoplasm. The UvrABC repair system catalyzes the recognition and processing of DNA lesions. UvrC both incises the 5' and 3' sides of the lesion. The N-terminal half is responsible for the 3' incision and the C-terminal half is responsible for the 5' incision. The polypeptide is UvrABC system protein C (Verminephrobacter eiseniae (strain EF01-2)).